The following is a 358-amino-acid chain: Mannonate dehydratase (358 aa).

It belongs to the mannonate dehydratase family. Fe(2+) serves as cofactor. It depends on Mn(2+) as a cofactor.

The enzyme catalyses D-mannonate = 2-dehydro-3-deoxy-D-gluconate + H2O. The protein operates within carbohydrate metabolism; pentose and glucuronate interconversion. Functionally, catalyzes the dehydration of D-mannonate. The polypeptide is Mannonate dehydratase (Lactococcus lactis subsp. cremoris (strain MG1363)).